The sequence spans 299 residues: MSKHDVERLPAACGLTCPQRLGQYWQLVRGDRPIGSLLLLWPTWWALWLAADGLPPLWTLFVFTAGVWLTRSAGCVINDYADRWLDPHVERTKSRPLATGAVSGREALWVFVVLMLVAFALVFTLNWLTVLLSVPGVFLAASYPYLKRHTHLPQVYLGMAFGWGIPMAFAAVQGSVPVLGWLLYAANILWATAYDTWYAMVDRDDDIRMGSKSTAILFGRFDLVAQGILYALMFAVLALVDLRADLGAAYWAGLGVAALLVAYEFRIARHRERGPCFRAFLHNNWVGLAIFVGIAVAGR.

7 consecutive transmembrane segments (helical) span residues 34 to 54, 57 to 77, 108 to 128, 163 to 183, 221 to 241, 245 to 265, and 277 to 297; these read IGSL…ADGL, LWTL…GCVI, LWVF…LNWL, WGIP…GWLL, FDLV…ALVD, DLGA…AYEF, and FRAF…IAVA.

The protein belongs to the UbiA prenyltransferase family. Mg(2+) is required as a cofactor.

Its subcellular location is the cell inner membrane. It carries out the reaction all-trans-octaprenyl diphosphate + 4-hydroxybenzoate = 4-hydroxy-3-(all-trans-octaprenyl)benzoate + diphosphate. The protein operates within cofactor biosynthesis; ubiquinone biosynthesis. In terms of biological role, catalyzes the prenylation of para-hydroxybenzoate (PHB) with an all-trans polyprenyl group. Mediates the second step in the final reaction sequence of ubiquinone-8 (UQ-8) biosynthesis, which is the condensation of the polyisoprenoid side chain with PHB, generating the first membrane-bound Q intermediate 3-octaprenyl-4-hydroxybenzoate. The polypeptide is 4-hydroxybenzoate octaprenyltransferase (Xanthomonas oryzae pv. oryzae (strain MAFF 311018)).